The chain runs to 350 residues: MKNKYYPLRSSIDELSTKNDNEIDLEKGPLPEYNSEDGSTLPPYSENLKLKDPKQMGANNPNLFNTDESTTPPDYGEDSLSHRENHSSGTTDNSSPFLIKLLISFIPIFVLNVPAVCYLTYKDALFKDYGKDEWVYFGMWCASCLMIFISLWCFYETWTQAVAQCVKVTAISLAKCVKVISIGLFNIRREMMIIIWILWLIICCILFVYIKSGDLNLNKALIYSTCTISAVLLLIVSSVCIPFWTFERTLAKLAKVFLLQSGIVLVLNGTMFLRGKHFEWTGCEIEASVLFIMGNVLFLCEMECPGALRRMPKSIRNGIASFLGGIANAIRGANDNNDIPLGEMDVESEV.

The tract at residues methionine 1 to aspartate 92 is disordered. Over residues serine 11–proline 29 the composition is skewed to basic and acidic residues. The span at glycine 57–proline 72 shows a compositional bias: polar residues. 7 helical membrane-spanning segments follow: residues phenylalanine 97–cysteine 117, tryptophan 134–phenylalanine 154, cysteine 165–phenylalanine 185, glutamate 190–isoleucine 210, cysteine 226–phenylalanine 246, leucine 253–leucine 273, and tryptophan 280–cysteine 300.

The protein belongs to the WTF family. Homomer. Forms protein aggregates. The two isoforms can interact with each other and with themselves. High sequence similarity is required for their interaction.

Its subcellular location is the spore membrane. It is found in the vacuole membrane. The protein resides in the ascus epiplasm. The protein localises to the cytoplasm. It localises to the endoplasmic reticulum membrane. Its function is as follows. Promotes unequal transmission of alleles from the parental zygote to progeny spores by acting as poison/antidote system where the poison and antidote proteins are produced from the same locus; the poison component is trans-acting and targets all spores within an ascus whereas the antidote component is spore-specific, leading to poisoning of all progeny that do not inherit the allele. Localizes isoform 2 to the vacuole thereby facilitating its degradation. In terms of biological role, forms toxic aggregates that disrupt spore maturation. The protein is Meiotic driver wtf30 of Schizosaccharomyces kambucha (Fission yeast).